The following is a 332-amino-acid chain: Holliday junction branch migration complex subunit RuvB (332 aa).

Positions 1–181 (MSRILDNELM…FGITGHMEYY (181 aa)) are large ATPase domain (RuvB-L). Residues Leu20, Arg21, Gly62, Lys65, Thr66, Thr67, 128–130 (EDF), Arg171, Tyr181, and Arg218 contribute to the ATP site. A Mg(2+)-binding site is contributed by Thr66. The interval 182–252 (EAGDLTEIVE…ITDQALSMLD (71 aa)) is small ATPAse domain (RuvB-S). Residues 255-332 (QEGLDYVDQK…EHLGYEYMKE (78 aa)) form a head domain (RuvB-H) region. DNA-binding residues include Arg291, Arg310, Arg312, and Arg315.

This sequence belongs to the RuvB family. In terms of assembly, homohexamer. Forms an RuvA(8)-RuvB(12)-Holliday junction (HJ) complex. HJ DNA is sandwiched between 2 RuvA tetramers; dsDNA enters through RuvA and exits via RuvB. An RuvB hexamer assembles on each DNA strand where it exits the tetramer. Each RuvB hexamer is contacted by two RuvA subunits (via domain III) on 2 adjacent RuvB subunits; this complex drives branch migration. In the full resolvosome a probable DNA-RuvA(4)-RuvB(12)-RuvC(2) complex forms which resolves the HJ.

The protein resides in the cytoplasm. It carries out the reaction ATP + H2O = ADP + phosphate + H(+). Functionally, the RuvA-RuvB-RuvC complex processes Holliday junction (HJ) DNA during genetic recombination and DNA repair, while the RuvA-RuvB complex plays an important role in the rescue of blocked DNA replication forks via replication fork reversal (RFR). RuvA specifically binds to HJ cruciform DNA, conferring on it an open structure. The RuvB hexamer acts as an ATP-dependent pump, pulling dsDNA into and through the RuvAB complex. RuvB forms 2 homohexamers on either side of HJ DNA bound by 1 or 2 RuvA tetramers; 4 subunits per hexamer contact DNA at a time. Coordinated motions by a converter formed by DNA-disengaged RuvB subunits stimulates ATP hydrolysis and nucleotide exchange. Immobilization of the converter enables RuvB to convert the ATP-contained energy into a lever motion, pulling 2 nucleotides of DNA out of the RuvA tetramer per ATP hydrolyzed, thus driving DNA branch migration. The RuvB motors rotate together with the DNA substrate, which together with the progressing nucleotide cycle form the mechanistic basis for DNA recombination by continuous HJ branch migration. Branch migration allows RuvC to scan DNA until it finds its consensus sequence, where it cleaves and resolves cruciform DNA. In Streptococcus sanguinis (strain SK36), this protein is Holliday junction branch migration complex subunit RuvB.